The primary structure comprises 252 residues: Beta-carotene isomerase D27, chloroplastic (252 aa).

The N-terminal 43 residues, methionine 1 to serine 43, are a transit peptide targeting the chloroplast.

The cofactor is Fe cation. In terms of tissue distribution, highly expressed in roots. Expressed at low levels in leaves and stems.

The protein resides in the plastid. It localises to the chloroplast. The catalysed reaction is all-trans-beta-carotene = 9-cis-beta-carotene. Involved in strigolactones biosynthesis by catalyzing the isomerization of the C9-C10 double bond in all-trans-beta-carotene leading to 9-cis-beta-carotene and providing the substrate for CCD7. Strigolactones are hormones that inhibit tillering and shoot branching through the MAX-dependent pathway, contribute to the regulation of shoot architectural response to phosphate-limiting conditions and function as rhizosphere signals that stimulate hyphal branching of arbuscular mycorrhizal fungi and trigger seed germination of root parasitic weeds. This Medicago truncatula (Barrel medic) protein is Beta-carotene isomerase D27, chloroplastic.